Consider the following 266-residue polypeptide: MEVANATQQKHFVLVHGAGHGAWCWYKLKSLLESSRHKVTAIDLATSGVNPKRLDEVDTLQDYCLPLLELMAAIPQDDKVIVVGHSYGGFCIALAMDLYPKKISIGVFIGSIMPDSTHPPIYFFNQYYEWNPDGDDSPDTKVETYGCPDQPRTVIHFGPIYLSTKLYQNCTSEEIELAKVLVRPVTLFSEDLSKLKAFSEEGYGSVKRGYIICSEDKAFPVGLQHWLVDNVGVSEVKEIKGADHMPMISKPQELCQCLVEIAEKVV.

The AB hydrolase-1 domain maps to 11-121; the sequence is HFVLVHGAGH…IMPDSTHPPI (111 aa). Residues serine 86, aspartate 216, and histidine 244 contribute to the active site.

The protein belongs to the AB hydrolase superfamily. In terms of assembly, homodimer. Mainly expressed in roots.

The catalysed reaction is 17-dehydropreakuammicine + H2O = norfluorocurarine + methanol + CO2. It functions in the pathway alkaloid biosynthesis. Its function is as follows. Hydrolase involved in the biosynthesis of curare monoterpene indole alkaloids (MIAs), natural products such as strychnine, a neurotoxic compound used as a pesticide to control rodents, and its pharmacologically active derivatives, including brucine, used to regulate blood pressure. Curare alkaloids act as animal glycine receptor antagonists. Catalyzes the conversion of dehydropreakuammicine to norfluorocurarine. This is Norfluorocurarine synthase 2 from Strychnos nux-vomica (Poison nut).